Here is a 60-residue protein sequence, read N- to C-terminus: Large ribosomal subunit protein bL32 (60 aa).

The segment at 1–60 (MAVQQNKKSRSARDMRRSHDALEASTLSVEKSTGEVHLRHHVSPEGVYRGRKVIDKGADE) is disordered. Over residues 11–22 (SARDMRRSHDAL) the composition is skewed to basic and acidic residues.

It belongs to the bacterial ribosomal protein bL32 family.

In Ectopseudomonas mendocina (strain ymp) (Pseudomonas mendocina), this protein is Large ribosomal subunit protein bL32.